The primary structure comprises 276 residues: O-methyltransferase cnsE (276 aa).

Residues Q110, 133–134, and H155 each bind S-adenosyl-L-methionine; that span reads DA.

It belongs to the methyltransferase superfamily. The cofactor is S-adenosyl-L-methionine.

It functions in the pathway alkaloid biosynthesis. Its function is as follows. O-methyltransferase; part of the gene cluster that mediates the biosynthesis of communesins, a prominent class of indole alkaloids with great potential as pharmaceuticals. Communesins are biosynthesized by the coupling of tryptamine and aurantioclavine, two building blocks derived from L-tryptophan. The L-tryptophan decarboxylase cnsB converts L-tryptophan to tryptamine, whereas the tryptophan dimethylallyltransferase cnsF converts L-tryptophan to 4-dimethylallyl tryptophan which is further transformed to aurantioclavine by the aurantioclavine synthase cnsA, probably aided by the catalase cnsD. The cytochrome P450 monooxygenase cnsC catalyzes the heterodimeric coupling between the two different indole moieties, tryptamine and aurantioclavine, to construct vicinal quaternary stereocenters and yield the heptacyclic communesin scaffold. The O-methyltransferase cnsE then methylates the communesin scaffold to produce communesin K, the simplest characterized communesin that contains the heptacyclic core. The dioxygenase cnsJ converts communesin K into communesin I. Acylation to introduce the hexadienyl group at position N16 of communesin I by the acyltransferase cnsK leads to the production of communesin B. The hexadienyl group is produced by the highly reducing polyketide synthase cnsI, before being hydrolytically removed from cnsI by the serine hydrolase cnsH, converted into hexadienyl-CoA by the CoA ligase cnsG, and then transferred to communesin I by cnsK. Surprisingly, cnsK may also be a promiscuous acyltransferase that can tolerate a range of acyl groups, including acetyl-, propionyl-, and butyryl-CoA, which lead to communesins A, G and H respectively. The roles of the alpha-ketoglutarate-dependent dioxygenases cnsM and cnsP have still to be determined. The polypeptide is O-methyltransferase cnsE (Penicillium expansum (Blue mold rot fungus)).